The chain runs to 63 residues: UPF0434 protein GDI0182/Gdia_2252 (63 aa).

It belongs to the UPF0434 family.

This is UPF0434 protein GDI0182/Gdia_2252 from Gluconacetobacter diazotrophicus (strain ATCC 49037 / DSM 5601 / CCUG 37298 / CIP 103539 / LMG 7603 / PAl5).